Consider the following 173-residue polypeptide: Cytidylate kinase (173 aa).

7–15 lines the ATP pocket; sequence GLAGTGTST.

It belongs to the cytidylate kinase family. Type 2 subfamily.

The protein resides in the cytoplasm. The catalysed reaction is CMP + ATP = CDP + ADP. It carries out the reaction dCMP + ATP = dCDP + ADP. This Methanosphaera stadtmanae (strain ATCC 43021 / DSM 3091 / JCM 11832 / MCB-3) protein is Cytidylate kinase.